The following is a 49-amino-acid chain: Defensin Tm-AMP-D1.2 (49 aa).

Intrachain disulfides connect C3–C49, C14–C34, C20–C43, and C24–C45.

Functionally, plant defense peptide. The chain is Defensin Tm-AMP-D1.2 from Triticum monococcum (Einkorn wheat).